The primary structure comprises 493 residues: D-aminoacyl-tRNA deacylase (493 aa).

Basic and acidic residues predominate over residues 22-37; it reads DLGDWERRDDPSRPDA. 2 disordered regions span residues 22–44 and 441–493; these read DLGD…GTYY and PEGP…EPSE.

This sequence belongs to the DtdA deacylase family. As to quaternary structure, monomer. Zn(2+) serves as cofactor.

The catalysed reaction is a D-aminoacyl-tRNA + H2O = a tRNA + a D-alpha-amino acid + H(+). The enzyme catalyses glycyl-tRNA(Ala) + H2O = tRNA(Ala) + glycine + H(+). Its function is as follows. D-aminoacyl-tRNA deacylase with broad substrate specificity. By recycling D-aminoacyl-tRNA to D-amino acids and free tRNA molecules, this enzyme counteracts the toxicity associated with the formation of D-aminoacyl-tRNA entities in vivo. The protein is D-aminoacyl-tRNA deacylase of Halorubrum lacusprofundi (strain ATCC 49239 / DSM 5036 / JCM 8891 / ACAM 34).